A 117-amino-acid polypeptide reads, in one-letter code: Large ribosomal subunit protein uL18 (117 aa).

The protein belongs to the universal ribosomal protein uL18 family. Part of the 50S ribosomal subunit; part of the 5S rRNA/L5/L18/L25 subcomplex. Contacts the 5S and 23S rRNAs.

Functionally, this is one of the proteins that bind and probably mediate the attachment of the 5S RNA into the large ribosomal subunit, where it forms part of the central protuberance. The protein is Large ribosomal subunit protein uL18 of Polynucleobacter asymbioticus (strain DSM 18221 / CIP 109841 / QLW-P1DMWA-1) (Polynucleobacter necessarius subsp. asymbioticus).